A 436-amino-acid polypeptide reads, in one-letter code: UDP-N-acetylmuramate--L-alanine ligase (436 aa).

111 to 117 is an ATP binding site; sequence GTHGKTS.

The protein belongs to the MurCDEF family.

The protein localises to the cytoplasm. It carries out the reaction UDP-N-acetyl-alpha-D-muramate + L-alanine + ATP = UDP-N-acetyl-alpha-D-muramoyl-L-alanine + ADP + phosphate + H(+). It participates in cell wall biogenesis; peptidoglycan biosynthesis. Cell wall formation. This is UDP-N-acetylmuramate--L-alanine ligase from Pediococcus pentosaceus (strain ATCC 25745 / CCUG 21536 / LMG 10740 / 183-1w).